A 409-amino-acid polypeptide reads, in one-letter code: tRNA(Met) cytidine acetate ligase (409 aa).

Residues 7-20, Gly-102, Asn-169, and Arg-194 each bind ATP; that span reads VVEY…HLYH.

The protein belongs to the TmcAL family.

It is found in the cytoplasm. The enzyme catalyses cytidine(34) in elongator tRNA(Met) + acetate + ATP = N(4)-acetylcytidine(34) in elongator tRNA(Met) + AMP + diphosphate. Its function is as follows. Catalyzes the formation of N(4)-acetylcytidine (ac(4)C) at the wobble position of elongator tRNA(Met), using acetate and ATP as substrates. First activates an acetate ion to form acetyladenylate (Ac-AMP) and then transfers the acetyl group to tRNA to form ac(4)C34. This Clostridium botulinum (strain Okra / Type B1) protein is tRNA(Met) cytidine acetate ligase.